A 1761-amino-acid chain; its full sequence is 6-methylsalicylic acid synthase AOL_s00215g283 (1761 aa).

In terms of domain architecture, Ketosynthase family 3 (KS3) spans 18–443 (QDDIAIIGMA…GTVAHAVIEQ (426 aa)). Residues cysteine 190, histidine 325, and histidine 367 each act as for beta-ketoacyl synthase activity in the active site. Residues 554–870 (VWVFSGHGAH…ALGKLHCHGA (317 aa)) form a malonyl-CoA:ACP transacylase (MAT) domain region. The active-site For malonyltransferase activity is serine 641. Positions 918 to 1038 (HVLLGAKHQV…GHVANNEWSK (121 aa)) are N-terminal hotdog fold. A dehydratase (DH) domain region spans residues 918–1187 (HVLLGAKHQV…NGMRFSAVEG (270 aa)). A PKS/mFAS DH domain is found at 918 to 1191 (HVLLGAKHQV…FSAVEGTPGA (274 aa)). Histidine 950 serves as the catalytic Proton acceptor; for dehydratase activity. The interval 1050–1191 (LPSVKPSFAT…FSAVEGTPGA (142 aa)) is C-terminal hotdog fold. Catalysis depends on aspartate 1113, which acts as the Proton donor; for dehydratase activity. Residues 1399–1587 (GTYLITGGLG…IVSFLWTSWN (189 aa)) form a ketoreductase (KR) domain region. Residues 1654 to 1680 (PRKRAESSGTEAVSKGEVSEKAPVPKS) are disordered. Positions 1686-1761 (EYLQNAISEC…HLVKWFEEKI (76 aa)) constitute a Carrier domain. An O-(pantetheine 4'-phosphoryl)serine modification is found at serine 1721.

The catalysed reaction is 3 malonyl-CoA + acetyl-CoA + NADPH + 3 H(+) = 6-methylsalicylate + 3 CO2 + NADP(+) + 4 CoA + H2O. It functions in the pathway secondary metabolite biosynthesis; terpenoid biosynthesis. Its function is as follows. 6-methylsalicylic acid synthase; part of the gene cluster that mediates the biosynthesis of sesquiterpenyl epoxy-cyclohexenoids (SECs) such as anthrobotrisins and arthrosporols, metabolites that possess a novel hybrid carbon skeleton consisting of a polyketide-derived epoxycyclohexenol combined with a terpenoid-derived monocyclic sesquiterpenol substructure (PKS-PTS hybrid). The SEC pathway plays an important role for fungal soil colonization via decreasing fungal nematode-capturing ability. Within the pathway, the polyketide synthase (PKS) AOL_s00215g283 catalyzes the biosynthesis of 6-methylsalicylic acid (6-MSA) via condensation of 1 acetate and 3 malonate units. AOL_s00215g283 performs a series of programmed reactions including Claisen condensation, dehydration, reduction, and cyclization to yield 6-MSA. The pathway begins with the biosynthesis of 6-methylsalicylic acid (6-MSA), the first precursor of the polyketide-derived epoxycyclohexenol in arthrosporols, by the polyketide synthase (PKS) AOL_s00215g283. The 6-methylsalicylic acid decarboxylase AOL_s00215g281 then catalyzes the decarboxylation of 6-methylsalicylic acid to yield m-cresol. The cytochrome P450 monooxygenase AOL_s00215g282 further oxidizes m-cresol to yield toluquinol. With the assistance of the oxidoreductase AOL_s00215g277, the polyprenyl transferase AOL_s00215g276 catalyzes the farnesylation of toluquinol to produce farnesyl hydroquinone, the hybrid precursor for biosynthesis of SECs. Farnesyl hydroquinone undergoes epoxidation and then subsequent dehydrogenation to form farnesyl epoxy-quinone, the first and simplest SEC. The cytochrome P450 monooxygenase AOL_s00215g278 and the FAD-dependent monooxygenase AOL_s00215g279 might be involved in the oxygenation of the phenol moiety, most likely in the epoxy formation. The cytochrome P450 monooxygenases AOL_s00215g274 and AOL_s00215g280 are involved in specific regional ketone reductions at respectively C-4 and C-1 of farnesyl epoxy-quinone PubMed:33823587. The chain is 6-methylsalicylic acid synthase AOL_s00215g283 from Arthrobotrys oligospora (strain ATCC 24927 / CBS 115.81 / DSM 1491) (Nematode-trapping fungus).